A 94-amino-acid polypeptide reads, in one-letter code: MFTINAEVRKEQGKGASRRLRAANKFPAIIYGGKEAPLAIELDHDKVMNMQAKAEFYSEVLTIVVDGKEIKVKAQDVQRHPYKPKLQHIDFVRA.

It belongs to the bacterial ribosomal protein bL25 family. Part of the 50S ribosomal subunit; part of the 5S rRNA/L5/L18/L25 subcomplex. Contacts the 5S rRNA. Binds to the 5S rRNA independently of L5 and L18.

This is one of the proteins that binds to the 5S RNA in the ribosome where it forms part of the central protuberance. In Escherichia coli (strain K12 / DH10B), this protein is Large ribosomal subunit protein bL25.